Here is a 366-residue protein sequence, read N- to C-terminus: NADH-quinone oxidoreductase subunit D (366 aa).

This sequence belongs to the complex I 49 kDa subunit family. NDH-1 is composed of 14 different subunits. Subunits NuoB, C, D, E, F, and G constitute the peripheral sector of the complex.

It localises to the cell membrane. It carries out the reaction a quinone + NADH + 5 H(+)(in) = a quinol + NAD(+) + 4 H(+)(out). NDH-1 shuttles electrons from NADH, via FMN and iron-sulfur (Fe-S) centers, to quinones in the respiratory chain. The immediate electron acceptor for the enzyme in this species is believed to be a menaquinone. Couples the redox reaction to proton translocation (for every two electrons transferred, four hydrogen ions are translocated across the cytoplasmic membrane), and thus conserves the redox energy in a proton gradient. This chain is NADH-quinone oxidoreductase subunit D, found in Bacillus cereus (strain ATCC 14579 / DSM 31 / CCUG 7414 / JCM 2152 / NBRC 15305 / NCIMB 9373 / NCTC 2599 / NRRL B-3711).